A 495-amino-acid polypeptide reads, in one-letter code: Probable plastidic glucose transporter 3 (495 aa).

12 consecutive transmembrane segments (helical) span residues 55–75, 97–117, 131–151, 154–174, 183–203, 214–234, 294–314, 330–350, 357–377, 384–404, 425–445, and 451–471; these read LPHVLVASLTSLLFGYHLGVV, LVVSTCLGGAFIGSLFSGLVA, LPMIVGASVSASTESLMGMLL, FLVGIGMGIGPSVTALYVTEV, YGSSTQIATCIGLLGSLFAGI, ICFWISTVPAAMLAVFMELCV, VVFIGSTLFALQQLSGINAVF, SANICVGVCNLLGSTVAVVLM, VLLIGSFAGMAVSLGLQAIAY, FGTLFLSVGGMLLFVLSFATG, ALAVCLAVHWVINFFVGLLFL, and LGSVLLNAIFGFFCVVAVIFV.

The protein belongs to the major facilitator superfamily. Sugar transporter (TC 2.A.1.1) family.

The protein resides in the plastid. It is found in the chloroplast membrane. May be involved in the efflux of glucose towards the cytosol. The chain is Probable plastidic glucose transporter 3 from Arabidopsis thaliana (Mouse-ear cress).